The sequence spans 575 residues: Alpha-(1,6)-fucosyltransferase (575 aa).

At 1–9 (MRAWTGSWR) the chain is on the cytoplasmic side. The helical; Signal-anchor for type II membrane protein transmembrane segment at 10 to 30 (WIMLILFAWGTLLFYIGGHLV) threads the bilayer. Residues 31–575 (RDNDHPDHSS…KYPTYPEAEK (545 aa)) are Lumenal-facing. Disulfide bonds link C204–C266, C212–C230, and C218–C222. The GT23 domain occupies 206 to 493 (KARKLVCNIN…PDASANFHSL (288 aa)). S278 bears the Phosphoserine mark. An SH3-binding motif is present at residues 299 to 305 (PRPPYLP). Residues 365-366 (RR) are important for donor substrate binding. C465 and C472 form a disulfide bridge. Residues 502 to 563 (QNAHNQIAVY…PSYKVREKIE (62 aa)) enclose the SH3 domain.

This sequence belongs to the glycosyltransferase 23 family. Post-translationally, tyrosine phosphorylated by PKDCC/VLK.

Its subcellular location is the golgi apparatus. It localises to the golgi stack membrane. The catalysed reaction is N(4)-{beta-D-GlcNAc-(1-&gt;2)-alpha-D-Man-(1-&gt;3)-[beta-D-GlcNAc-(1-&gt;2)-alpha-D-Man-(1-&gt;6)]-beta-D-Man-(1-&gt;4)-beta-D-GlcNAc-(1-&gt;4)-beta-D-GlcNAc}-L-asparaginyl-[protein] + GDP-beta-L-fucose = an N(4)-{beta-D-GlcNAc-(1-&gt;2)-alpha-D-Man-(1-&gt;3)-[beta-D-GlcNAc-(1-&gt;2)-alpha-D-Man-(1-&gt;6)]-beta-D-Man-(1-&gt;4)-beta-D-GlcNAc-(1-&gt;4)-[alpha-L-Fuc-(1-&gt;6)]-beta-D-GlcNAc}-L-asparaginyl-[protein] + GDP + H(+). It participates in protein modification; protein glycosylation. Catalyzes the addition of fucose in alpha 1-6 linkage to the first GlcNAc residue, next to the peptide chains in N-glycans. This chain is Alpha-(1,6)-fucosyltransferase (Fut8), found in Rattus norvegicus (Rat).